Here is a 183-residue protein sequence, read N- to C-terminus: Mitochondrial import inner membrane translocase subunit tim17 (183 aa).

Transmembrane regions (helical) follow at residues 13-33 (AGGAFAIGYVLMGVVNIGLGF), 57-77 (GGNFAIWGSLFSGFDCTLSYI), and 107-127 (VQAAAFGGIFIGIIEAFQHMM). Polar residues predominate over residues 131–141 (MQAQQEEMTQQ). The disordered stretch occupies residues 131–183 (MQAQQEEMTQQHLEERKRYEEERKQREGERKKLNENGKSKKNKQQQNGENDLD). Residues 142–168 (HLEERKRYEEERKQREGERKKLNENGK) are compositionally biased toward basic and acidic residues. The segment covering 174-183 (QQQNGENDLD) has biased composition (low complexity).

This sequence belongs to the Tim17/Tim22/Tim23 family.

The protein resides in the mitochondrion inner membrane. Its function is as follows. May be involved in the translocation of transit peptide-containing proteins across the mitochondrial inner membrane. This Dictyostelium discoideum (Social amoeba) protein is Mitochondrial import inner membrane translocase subunit tim17 (timm17).